The primary structure comprises 272 residues: UPF0759 protein YecE (272 aa).

The protein belongs to the UPF0759 family.

The sequence is that of UPF0759 protein YecE (yecE) from Escherichia coli O157:H7.